Consider the following 225-residue polypeptide: Golgi to ER traffic protein 1 (225 aa).

Met-1 is a topological domain (lumenal). The chain crosses the membrane as a helical span at residues 2–21 (NWVIIAALFFVIINKLLQYT). Residues 22–107 (SRYQEAWINK…SQSKLFNRLK (86 aa)) lie on the Cytoplasmic side of the membrane. The stretch at 37 to 104 (DISSLSKEYS…AKDSQSKLFN (68 aa)) forms a coiled coil. The helical transmembrane segment at 108-128 (LLTLTLPFMILKLWKGKFIVY) threads the bilayer. The Lumenal segment spans residues 129 to 172 (DIPTKDTFPVIVNGVLSQGLLYIPLLPINFLRGIDPNKHILVPG). A helical transmembrane segment spans residues 173 to 189 (VSLGIWLMALTKTIDTV). At 190–225 (EFIVKQLVFQPVVSKQVKEKTKEKVVELKTTEAELD) the chain is on the cytoplasmic side.

The protein belongs to the WRB/GET1 family. In terms of assembly, component of the Golgi to ER traffic (GET) complex, which is composed of GET1, GET2 and GET3. Within the complex, GET1 and GET2 form a heterotetramer which is stabilized by phosphatidylinositol binding and which binds to the GET3 homodimer.

It localises to the endoplasmic reticulum membrane. It is found in the golgi apparatus membrane. In terms of biological role, required for the post-translational delivery of tail-anchored (TA) proteins to the endoplasmic reticulum. Together with GET2, acts as a membrane receptor for soluble GET3, which recognizes and selectively binds the transmembrane domain of TA proteins in the cytosol. The GET complex cooperates with the HDEL receptor ERD2 to mediate the ATP-dependent retrieval of resident ER proteins that contain a C-terminal H-D-E-L retention signal from the Golgi to the ER. This chain is Golgi to ER traffic protein 1, found in Vanderwaltozyma polyspora (strain ATCC 22028 / DSM 70294 / BCRC 21397 / CBS 2163 / NBRC 10782 / NRRL Y-8283 / UCD 57-17) (Kluyveromyces polysporus).